A 288-amino-acid polypeptide reads, in one-letter code: 4-diphosphocytidyl-2-C-methyl-D-erythritol kinase (288 aa).

Lys-11 is a catalytic residue. Pro-93 to Ser-103 contributes to the ATP binding site. Asp-135 is an active-site residue.

Belongs to the GHMP kinase family. IspE subfamily.

The enzyme catalyses 4-CDP-2-C-methyl-D-erythritol + ATP = 4-CDP-2-C-methyl-D-erythritol 2-phosphate + ADP + H(+). It functions in the pathway isoprenoid biosynthesis; isopentenyl diphosphate biosynthesis via DXP pathway; isopentenyl diphosphate from 1-deoxy-D-xylulose 5-phosphate: step 3/6. Catalyzes the phosphorylation of the position 2 hydroxy group of 4-diphosphocytidyl-2C-methyl-D-erythritol. This chain is 4-diphosphocytidyl-2-C-methyl-D-erythritol kinase, found in Chlorobium limicola (strain DSM 245 / NBRC 103803 / 6330).